The sequence spans 306 residues: Nod factor export ATP-binding protein I (306 aa).

The 231-residue stretch at 8-238 folds into the ABC transporter domain; it reads IDLVGVRKSF…HIGCNVIEIY (231 aa). 40 to 47 serves as a coordination point for ATP; that stretch reads GPNGAGKS.

Belongs to the ABC transporter superfamily. Lipooligosaccharide exporter (TC 3.A.1.102) family. As to quaternary structure, the complex is composed of two ATP-binding proteins (NodI) and two transmembrane proteins (NodJ).

Its subcellular location is the cell inner membrane. Part of the ABC transporter complex NodIJ involved in the export of the nodulation factors (Nod factors), the bacterial signal molecules that induce symbiosis and subsequent nodulation induction. Nod factors are LCO (lipo-chitin oligosaccharide), a modified beta-1,4-linked N-acetylglucosamine oligosaccharide. This subunit is responsible for energy coupling to the transport system. This is Nod factor export ATP-binding protein I from Bradyrhizobium diazoefficiens (strain JCM 10833 / BCRC 13528 / IAM 13628 / NBRC 14792 / USDA 110).